An 841-amino-acid chain; its full sequence is Rho guanine nucleotide exchange factor 15 (841 aa).

Disordered stretches follow at residues 1-179, 239-261, and 279-333; these read MSAQ…QARA, RRAS…HPAV, and KPPK…REEE. The segment covering 39–53 has biased composition (polar residues); sequence NGSSPQELPRNSNDA. Low complexity predominate over residues 65-110; it reads PPAASLKPPALLPPSASRASLDSQTSPDSPSSTPTPSPVSRRSASP. Residues Ser107 and Ser109 each carry the phosphoserine modification. The span at 111–124 shows a compositional bias: pro residues; that stretch reads EPAPRSPVPPPKPS. Tyr353 is subject to Phosphotyrosine; by EPHB2. Residues 417-601 enclose the DH domain; sequence RMQESLFEVV…SKIIERCSAE (185 aa). Residues 765–793 are disordered; the sequence is ESSAPAKTEGRSLESRAAPKHLHKTPEGW.

As to quaternary structure, interacts with EPHB2. Interacts with EPHA4. In terms of processing, phosphorylated on tyrosine residues upon EFNA1 stimulation. EPHB2-dependent phosphorylation at Tyr-353 triggers UBE3A-mediated ubiquitination. Post-translationally, ubiquitinated; UBE3A-mediated ubiquitination and degradation by the proteasome promotes EFNB1-dependent synapse formation. As to expression, expressed in the vascular smooth muscle of coronary artery.

It is found in the cell projection. Its subcellular location is the dendrite. Functionally, specific GEF for RhoA activation. Does not activate RAC1 or CDC42. Regulates vascular smooth muscle contractility. Negatively regulates excitatory synapse development by suppressing the synapse-promoting activity of EPHB2. The chain is Rho guanine nucleotide exchange factor 15 (ARHGEF15) from Homo sapiens (Human).